Reading from the N-terminus, the 908-residue chain is 5'-3' exoribonuclease 2 homolog (908 aa).

The CCHC-type zinc-finger motif lies at 263-280 (RPCDICNGFGHEMDKCVG). Disordered regions lie at residues 409 to 457 (RQRR…VGNY) and 821 to 908 (GGNQ…YRRF). Positions 432 to 454 (HGSLNQSAFGASAVGPNSQQRSV) are enriched in polar residues. The residue at position 438 (S438) is a Phosphoserine. 2 stretches are compositionally biased toward low complexity: residues 825 to 868 (GQSY…HNQR) and 878 to 908 (QRNFNNYNGPRNNNYQQQGGSRQQNQNYRRF).

The protein belongs to the 5'-3' exonuclease family. XRN2/RAT1 subfamily. Interacts with cuff and Rai1; the interaction with cuff may inhibit its role in RNA degradation.

The protein localises to the nucleus. Functionally, a 5'-3' exoribonuclease. May promote the termination of transcription by RNA polymerase II and promote RNA degradation. Involved in turnover of piRNA precursors. This chain is 5'-3' exoribonuclease 2 homolog, found in Drosophila melanogaster (Fruit fly).